A 955-amino-acid polypeptide reads, in one-letter code: Glycine dehydrogenase (decarboxylating) (955 aa).

N6-(pyridoxal phosphate)lysine is present on Lys702.

This sequence belongs to the GcvP family. In terms of assembly, the glycine cleavage system is composed of four proteins: P, T, L and H. The cofactor is pyridoxal 5'-phosphate.

The catalysed reaction is N(6)-[(R)-lipoyl]-L-lysyl-[glycine-cleavage complex H protein] + glycine + H(+) = N(6)-[(R)-S(8)-aminomethyldihydrolipoyl]-L-lysyl-[glycine-cleavage complex H protein] + CO2. Functionally, the glycine cleavage system catalyzes the degradation of glycine. The P protein binds the alpha-amino group of glycine through its pyridoxal phosphate cofactor; CO(2) is released and the remaining methylamine moiety is then transferred to the lipoamide cofactor of the H protein. This chain is Glycine dehydrogenase (decarboxylating), found in Stenotrophomonas maltophilia (strain K279a).